We begin with the raw amino-acid sequence, 427 residues long: Tyrosine--tRNA ligase (427 aa).

Tyrosine 39 is a binding site for L-tyrosine. The 'HIGH' region motif lies at 44 to 53; that stretch reads PTSDSLHIGH. The L-tyrosine site is built by tyrosine 178 and glutamine 182. The 'KMSKS' region motif lies at 238 to 242; the sequence is KFGKT. An ATP-binding site is contributed by lysine 241. Positions 360-417 constitute an S4 RNA-binding domain; the sequence is ITLQQALVESKLVVSRAQARELISSNSITVNSKKQLKTEYIFCATDRLYNRFTLLRRG.

This sequence belongs to the class-I aminoacyl-tRNA synthetase family. TyrS type 1 subfamily. Homodimer.

The protein localises to the cytoplasm. It catalyses the reaction tRNA(Tyr) + L-tyrosine + ATP = L-tyrosyl-tRNA(Tyr) + AMP + diphosphate + H(+). In terms of biological role, catalyzes the attachment of tyrosine to tRNA(Tyr) in a two-step reaction: tyrosine is first activated by ATP to form Tyr-AMP and then transferred to the acceptor end of tRNA(Tyr). This chain is Tyrosine--tRNA ligase, found in Blochmanniella pennsylvanica (strain BPEN).